Here is a 124-residue protein sequence, read N- to C-terminus: Small ribosomal subunit protein uS12 (124 aa).

The residue at position 89 (Asp-89) is a 3-methylthioaspartic acid.

The protein belongs to the universal ribosomal protein uS12 family. As to quaternary structure, part of the 30S ribosomal subunit. Contacts proteins S8 and S17. May interact with IF1 in the 30S initiation complex.

With S4 and S5 plays an important role in translational accuracy. In terms of biological role, interacts with and stabilizes bases of the 16S rRNA that are involved in tRNA selection in the A site and with the mRNA backbone. Located at the interface of the 30S and 50S subunits, it traverses the body of the 30S subunit contacting proteins on the other side and probably holding the rRNA structure together. The combined cluster of proteins S8, S12 and S17 appears to hold together the shoulder and platform of the 30S subunit. The polypeptide is Small ribosomal subunit protein uS12 (Vibrio campbellii (strain ATCC BAA-1116)).